Consider the following 146-residue polypeptide: Urease accessory protein UreE 1 (146 aa).

This sequence belongs to the UreE family.

The protein resides in the cytoplasm. Involved in urease metallocenter assembly. Binds nickel. Probably functions as a nickel donor during metallocenter assembly. The chain is Urease accessory protein UreE 1 from Pseudomonas syringae pv. syringae (strain B728a).